The following is a 188-amino-acid chain: Protein SSX5 (188 aa).

The KRAB-related domain occupies lysine 20 to aspartate 83. The segment at aspartate 78–glutamate 188 is disordered. The segment covering threonine 112–aspartate 122 has biased composition (basic and acidic residues). The span at lysine 144–serine 155 shows a compositional bias: polar residues. Positions glycine 156–glutamate 170 are enriched in basic residues. Residues glutamate 179–glutamate 188 show a composition bias toward acidic residues.

The protein belongs to the SSX family.

Could act as a modulator of transcription. This Homo sapiens (Human) protein is Protein SSX5 (SSX5).